A 389-amino-acid chain; its full sequence is Lipid-A-disaccharide synthase (389 aa).

It belongs to the LpxB family.

It catalyses the reaction a lipid X + a UDP-2-N,3-O-bis[(3R)-3-hydroxyacyl]-alpha-D-glucosamine = a lipid A disaccharide + UDP + H(+). The protein operates within bacterial outer membrane biogenesis; LPS lipid A biosynthesis. In terms of biological role, condensation of UDP-2,3-diacylglucosamine and 2,3-diacylglucosamine-1-phosphate to form lipid A disaccharide, a precursor of lipid A, a phosphorylated glycolipid that anchors the lipopolysaccharide to the outer membrane of the cell. This is Lipid-A-disaccharide synthase from Burkholderia cenocepacia (strain HI2424).